The primary structure comprises 115 residues: MSYEHAASTSIIFLILSPGGRKCVCFISRVVCSKSMFSTLLSKTLLRFFKSYICLLRSVISPEYFSFNSFNSSRAITISIVEFFCCLLGGIVSCYEVKAELCGIFILLNNDEENQ.

This is an uncharacterized protein from Ostreid herpesvirus 1 (isolate France) (OsHV-1).